Reading from the N-terminus, the 60-residue chain is Large ribosomal subunit protein bL32 (60 aa).

Positions 1-23 (MACPKKKTSNAKRDQRRAHWRKQ) are enriched in basic residues. The segment at 1–60 (MACPKKKTSNAKRDQRRAHWRKQAAREAQKALSLGKSVLSGRSNSFVYPTKEEEEGEDEE) is disordered.

Belongs to the bacterial ribosomal protein bL32 family.

This chain is Large ribosomal subunit protein bL32, found in Microcystis aeruginosa (strain NIES-843 / IAM M-2473).